The chain runs to 491 residues: Lysosomal Pro-X carboxypeptidase (491 aa).

An N-terminal signal peptide occupies residues 1-17; it reads MGCRALLLLSFLLLGAA. A propeptide spanning residues 18–43 is cleaved from the precursor; sequence TTIPPRLKTLGSPHLSASPTPDPAVA. Residue Asn-99 is glycosylated (N-linked (GlcNAc...) asparagine). Ser-177 (charge relay system) is an active-site residue. An SKS domain region spans residues 192–332; sequence HIVVGALAAS…QNIFQALSVY (141 aa). 4 disulfide bridges follow: Cys-213–Cys-370, Cys-231–Cys-308, Cys-262–Cys-341, and Cys-362–Cys-392. N-linked (GlcNAc...) asparagine glycosylation is found at Asn-315, Asn-334, and Asn-343. N-linked (GlcNAc...) asparagine glycosylation occurs at Asn-413. Residues Asp-428 and His-453 each act as charge relay system in the active site.

It belongs to the peptidase S28 family. As to quaternary structure, homodimer.

It localises to the lysosome. It catalyses the reaction Cleavage of a -Pro-|-Xaa bond to release a C-terminal amino acid.. Cleaves C-terminal amino acids linked to proline in peptides such as angiotensin II, III and des-Arg9-bradykinin. This cleavage occurs at acidic pH, but enzymatic activity is retained with some substrates at neutral pH. The polypeptide is Lysosomal Pro-X carboxypeptidase (Prcp) (Mus musculus (Mouse)).